The primary structure comprises 161 residues: Endoribonuclease YbeY (161 aa).

3 residues coordinate Zn(2+): histidine 120, histidine 124, and aspartate 130.

It belongs to the endoribonuclease YbeY family. Zn(2+) serves as cofactor.

Its subcellular location is the cytoplasm. Single strand-specific metallo-endoribonuclease involved in late-stage 70S ribosome quality control and in maturation of the 3' terminus of the 16S rRNA. The chain is Endoribonuclease YbeY from Chlamydia trachomatis serovar A (strain ATCC VR-571B / DSM 19440 / HAR-13).